The chain runs to 658 residues: Exoribonuclease 2 (658 aa).

Positions 189-531 constitute an RNB domain; that stretch reads REDLTALHFI…NHRLIKAVLT (343 aa). In terms of domain architecture, S1 motif spans 576–658; sequence KPTFQAEIQD…ETRSIVGTLC (83 aa).

The protein belongs to the RNR ribonuclease family. RNase II subfamily.

It localises to the cytoplasm. The catalysed reaction is Exonucleolytic cleavage in the 3'- to 5'-direction to yield nucleoside 5'-phosphates.. In terms of biological role, involved in mRNA degradation. Hydrolyzes single-stranded polyribonucleotides processively in the 3' to 5' direction. The polypeptide is Exoribonuclease 2 (Pasteurella multocida (strain Pm70)).